A 476-amino-acid chain; its full sequence is Aspartyl/glutamyl-tRNA(Asn/Gln) amidotransferase subunit B (476 aa).

Belongs to the GatB/GatE family. GatB subfamily. In terms of assembly, heterotrimer of A, B and C subunits.

The catalysed reaction is L-glutamyl-tRNA(Gln) + L-glutamine + ATP + H2O = L-glutaminyl-tRNA(Gln) + L-glutamate + ADP + phosphate + H(+). It catalyses the reaction L-aspartyl-tRNA(Asn) + L-glutamine + ATP + H2O = L-asparaginyl-tRNA(Asn) + L-glutamate + ADP + phosphate + 2 H(+). In terms of biological role, allows the formation of correctly charged Asn-tRNA(Asn) or Gln-tRNA(Gln) through the transamidation of misacylated Asp-tRNA(Asn) or Glu-tRNA(Gln) in organisms which lack either or both of asparaginyl-tRNA or glutaminyl-tRNA synthetases. The reaction takes place in the presence of glutamine and ATP through an activated phospho-Asp-tRNA(Asn) or phospho-Glu-tRNA(Gln). The polypeptide is Aspartyl/glutamyl-tRNA(Asn/Gln) amidotransferase subunit B (Solidesulfovibrio magneticus (strain ATCC 700980 / DSM 13731 / RS-1) (Desulfovibrio magneticus)).